A 79-amino-acid polypeptide reads, in one-letter code: Major outer membrane lipoprotein Lpp 2 (79 aa).

A signal peptide spans 1 to 21 (MNRTNQLILGAVVLGSTLLAG). C22 carries N-palmitoyl cysteine lipidation. Residue C22 is the site of S-diacylglycerol cysteine attachment. 2 repeats span residues 25–35 (NAKIDQLSSDV) and 39–49 (SAKVEQLSNDV). Residues 28 to 69 (IDQLSSDVQTLSAKVEQLSNDVNAMRSDVQAAKDDAARANQR) are a coiled coil. K79 is subject to N6-murein peptidoglycan lysine.

The protein belongs to the Lpp family. In terms of assembly, homotrimer.

It localises to the cell outer membrane. The protein resides in the secreted. Its subcellular location is the cell wall. Functionally, plays an important role in virulence. A highly abundant outer membrane lipoprotein that controls the distance between the inner and outer membranes. The only protein known to be covalently linked to the peptidoglycan network (PGN). Also non-covalently binds the PGN. The link between the cell outer membrane and PGN contributes to maintenance of the structural and functional integrity of the cell envelope, and maintains the correct distance between the PGN and the outer membrane. In Salmonella typhimurium (strain LT2 / SGSC1412 / ATCC 700720), this protein is Major outer membrane lipoprotein Lpp 2.